The sequence spans 617 residues: Dihydroxy-acid dehydratase (617 aa).

Residue aspartate 81 participates in Mg(2+) binding. Cysteine 122 contributes to the [2Fe-2S] cluster binding site. Residues aspartate 123 and lysine 124 each coordinate Mg(2+). Residue lysine 124 is modified to N6-carboxylysine. [2Fe-2S] cluster is bound at residue cysteine 195. Glutamate 491 is a Mg(2+) binding site. The active-site Proton acceptor is the serine 517.

Belongs to the IlvD/Edd family. In terms of assembly, homodimer. It depends on [2Fe-2S] cluster as a cofactor. The cofactor is Mg(2+).

The enzyme catalyses (2R)-2,3-dihydroxy-3-methylbutanoate = 3-methyl-2-oxobutanoate + H2O. It carries out the reaction (2R,3R)-2,3-dihydroxy-3-methylpentanoate = (S)-3-methyl-2-oxopentanoate + H2O. It functions in the pathway amino-acid biosynthesis; L-isoleucine biosynthesis; L-isoleucine from 2-oxobutanoate: step 3/4. It participates in amino-acid biosynthesis; L-valine biosynthesis; L-valine from pyruvate: step 3/4. In terms of biological role, functions in the biosynthesis of branched-chain amino acids. Catalyzes the dehydration of (2R,3R)-2,3-dihydroxy-3-methylpentanoate (2,3-dihydroxy-3-methylvalerate) into 2-oxo-3-methylpentanoate (2-oxo-3-methylvalerate) and of (2R)-2,3-dihydroxy-3-methylbutanoate (2,3-dihydroxyisovalerate) into 2-oxo-3-methylbutanoate (2-oxoisovalerate), the penultimate precursor to L-isoleucine and L-valine, respectively. The polypeptide is Dihydroxy-acid dehydratase (Buchnera aphidicola subsp. Schizaphis graminum (strain Sg)).